The following is a 625-amino-acid chain: DNA mismatch repair protein MutL (625 aa).

It belongs to the DNA mismatch repair MutL/HexB family.

Functionally, this protein is involved in the repair of mismatches in DNA. It is required for dam-dependent methyl-directed DNA mismatch repair. May act as a 'molecular matchmaker', a protein that promotes the formation of a stable complex between two or more DNA-binding proteins in an ATP-dependent manner without itself being part of a final effector complex. This Bacteroides fragilis (strain YCH46) protein is DNA mismatch repair protein MutL.